The sequence spans 235 residues: Interleukin-34 (235 aa).

The N-terminal stretch at 1 to 20 (MPWGLAWLYCLGILLDVALG) is a signal peptide. A glycan (N-linked (GlcNAc...) asparagine) is linked at N100.

Belongs to the IL-34 family. Homodimer. Interacts with CSF1R.

Its subcellular location is the secreted. In terms of biological role, cytokine that promotes the proliferation, survival and differentiation of monocytes and macrophages. Promotes the release of pro-inflammatory chemokines, and thereby plays an important role in innate immunity and in inflammatory processes. Plays an important role in the regulation of osteoclast proliferation and differentiation, and in the regulation of bone resorption. Signaling via CSF1R and its downstream effectors stimulates phosphorylation of MAPK1/ERK2 AND MAPK3/ERK1. This is Interleukin-34 (Il34) from Mus musculus (Mouse).